Here is a 253-residue protein sequence, read N- to C-terminus: Triosephosphate isomerase (253 aa).

Substrate is bound at residue 9–11; that stretch reads NWK. Histidine 96 acts as the Electrophile in catalysis. Glutamate 168 functions as the Proton acceptor in the catalytic mechanism. Residues glycine 174, serine 213, and 234–235 contribute to the substrate site; that span reads GG.

It belongs to the triosephosphate isomerase family. Homodimer.

It localises to the cytoplasm. The enzyme catalyses D-glyceraldehyde 3-phosphate = dihydroxyacetone phosphate. It functions in the pathway carbohydrate biosynthesis; gluconeogenesis. It participates in carbohydrate degradation; glycolysis; D-glyceraldehyde 3-phosphate from glycerone phosphate: step 1/1. Involved in the gluconeogenesis. Catalyzes stereospecifically the conversion of dihydroxyacetone phosphate (DHAP) to D-glyceraldehyde-3-phosphate (G3P). This chain is Triosephosphate isomerase, found in Hydrogenovibrio crunogenus (strain DSM 25203 / XCL-2) (Thiomicrospira crunogena).